The chain runs to 795 residues: Phenylalanine--tRNA ligase beta subunit (795 aa).

One can recognise a tRNA-binding domain in the interval 39 to 148 (AGQFHGVVVG…IDAPLGVDLR (110 aa)). The B5 domain occupies 401–476 (PQSATITLRR…RIYGYNNIPD (76 aa)). Mg(2+) is bound by residues Asp-454, Asp-460, Glu-463, and Glu-464. Residues 701–794 (SRFPSNRRDI…LKQRFQASLR (94 aa)) form the FDX-ACB domain.

This sequence belongs to the phenylalanyl-tRNA synthetase beta subunit family. Type 1 subfamily. Tetramer of two alpha and two beta subunits. The cofactor is Mg(2+).

Its subcellular location is the cytoplasm. The catalysed reaction is tRNA(Phe) + L-phenylalanine + ATP = L-phenylalanyl-tRNA(Phe) + AMP + diphosphate + H(+). This is Phenylalanine--tRNA ligase beta subunit from Photorhabdus laumondii subsp. laumondii (strain DSM 15139 / CIP 105565 / TT01) (Photorhabdus luminescens subsp. laumondii).